We begin with the raw amino-acid sequence, 379 residues long: Succinyl-diaminopimelate desuccinylase (379 aa).

Position 70 (His-70) interacts with Zn(2+). The active site involves Asp-72. A Zn(2+)-binding site is contributed by Asp-103. Glu-137 functions as the Proton acceptor in the catalytic mechanism. Glu-138, Glu-166, and His-352 together coordinate Zn(2+).

The protein belongs to the peptidase M20A family. DapE subfamily. Homodimer. It depends on Zn(2+) as a cofactor. Co(2+) is required as a cofactor.

It carries out the reaction N-succinyl-(2S,6S)-2,6-diaminopimelate + H2O = (2S,6S)-2,6-diaminopimelate + succinate. It functions in the pathway amino-acid biosynthesis; L-lysine biosynthesis via DAP pathway; LL-2,6-diaminopimelate from (S)-tetrahydrodipicolinate (succinylase route): step 3/3. Its function is as follows. Catalyzes the hydrolysis of N-succinyl-L,L-diaminopimelic acid (SDAP), forming succinate and LL-2,6-diaminopimelate (DAP), an intermediate involved in the bacterial biosynthesis of lysine and meso-diaminopimelic acid, an essential component of bacterial cell walls. The sequence is that of Succinyl-diaminopimelate desuccinylase from Shewanella baltica (strain OS223).